A 119-amino-acid polypeptide reads, in one-letter code: Small ribosomal subunit protein uS13 (119 aa).

The segment covering 94 to 113 (GLPVRGQRTKTNARTRKGPR) has biased composition (basic residues). Residues 94-119 (GLPVRGQRTKTNARTRKGPRKAIGAK) are disordered.

This sequence belongs to the universal ribosomal protein uS13 family. In terms of assembly, part of the 30S ribosomal subunit. Forms a loose heterodimer with protein S19. Forms two bridges to the 50S subunit in the 70S ribosome.

Functionally, located at the top of the head of the 30S subunit, it contacts several helices of the 16S rRNA. In the 70S ribosome it contacts the 23S rRNA (bridge B1a) and protein L5 of the 50S subunit (bridge B1b), connecting the 2 subunits; these bridges are implicated in subunit movement. Contacts the tRNAs in the A and P-sites. This Nitrosomonas europaea (strain ATCC 19718 / CIP 103999 / KCTC 2705 / NBRC 14298) protein is Small ribosomal subunit protein uS13.